A 394-amino-acid polypeptide reads, in one-letter code: Elongation factor Tu (394 aa).

The region spanning 10 to 204 (LPHVNIGTIG…AVDEYIPTPT (195 aa)) is the tr-type G domain. Residues 19–26 (GHVDHGKT) form a G1 region. Residue 19-26 (GHVDHGKT) coordinates GTP. Thr26 contributes to the Mg(2+) binding site. Residues 60–64 (GITIN) form a G2 region. The tract at residues 81–84 (DCPG) is G3. Residues 81–85 (DCPGH) and 136–139 (NKCD) each bind GTP. The segment at 136–139 (NKCD) is G4. The segment at 174-176 (SAL) is G5.

The protein belongs to the TRAFAC class translation factor GTPase superfamily. Classic translation factor GTPase family. EF-Tu/EF-1A subfamily. As to quaternary structure, monomer.

It localises to the cytoplasm. It catalyses the reaction GTP + H2O = GDP + phosphate + H(+). GTP hydrolase that promotes the GTP-dependent binding of aminoacyl-tRNA to the A-site of ribosomes during protein biosynthesis. This Mesoplasma florum (strain ATCC 33453 / NBRC 100688 / NCTC 11704 / L1) (Acholeplasma florum) protein is Elongation factor Tu.